The chain runs to 2971 residues: uncharacterized protein (2971 aa).

Residues 929-964 (SANFSNGPEESSLSTRLHIQKKRKAKKQRLETRRQK) form a disordered region. Residues 936–945 (PEESSLSTRL) show a composition bias toward polar residues. Basic residues predominate over residues 946–955 (HIQKKRKAKK).

The protein localises to the plastid. It is found in the chloroplast. This is an uncharacterized protein from Chlamydomonas reinhardtii (Chlamydomonas smithii).